The sequence spans 488 residues: Ribulose bisphosphate carboxylase large chain (488 aa).

Residues N127 and T177 each contribute to the substrate site. K179 functions as the Proton acceptor in the catalytic mechanism. Substrate is bound at residue K181. Mg(2+) contacts are provided by K205, D207, and E208. K205 bears the N6-carboxylysine mark. The Proton acceptor role is filled by H297. Residues R298, H330, and S382 each coordinate substrate.

This sequence belongs to the RuBisCO large chain family. Type I subfamily. Heterohexadecamer of 8 large chains and 8 small chains. Mg(2+) serves as cofactor.

It is found in the plastid. The protein localises to the chloroplast. The catalysed reaction is 2 (2R)-3-phosphoglycerate + 2 H(+) = D-ribulose 1,5-bisphosphate + CO2 + H2O. The enzyme catalyses D-ribulose 1,5-bisphosphate + O2 = 2-phosphoglycolate + (2R)-3-phosphoglycerate + 2 H(+). RuBisCO catalyzes two reactions: the carboxylation of D-ribulose 1,5-bisphosphate, the primary event in carbon dioxide fixation, as well as the oxidative fragmentation of the pentose substrate in the photorespiration process. Both reactions occur simultaneously and in competition at the same active site. The sequence is that of Ribulose bisphosphate carboxylase large chain from Guillardia theta (Cryptophyte).